The following is a 433-amino-acid chain: Steroid C26-monooxygenase (433 aa).

Glycine 202 contributes to the substrate binding site. Residue cysteine 377 coordinates heme.

The protein belongs to the cytochrome P450 family. Heme is required as a cofactor.

The catalysed reaction is cholest-4-en-3-one + 6 reduced [2Fe-2S]-[ferredoxin] + 3 O2 + 5 H(+) = (25S)-3-oxocholest-4-en-26-oate + 6 oxidized [2Fe-2S]-[ferredoxin] + 4 H2O. The protein operates within steroid metabolism; cholesterol degradation. Involved in the utilization of cholesterol as the sole carbon and energy source by degrading the side chain during infection. Primarily catalyzes the sequential oxidation of the terminal methyl of cholest-4-en-3-one into (25S)-26-hydroxycholest-4-en-3-one (alcohol), (25S)-26-oxocholest-4-en-3-one (aldehyde), to finally yield the carboxylic acid (25S)-3-oxocholest-4-en-26-oate. Also able to sequentially oxidize cholesterol itself, not only cholest-4-en-3-one. The polypeptide is Steroid C26-monooxygenase (cyp125) (Mycobacterium bovis (strain ATCC BAA-935 / AF2122/97)).